Here is a 308-residue protein sequence, read N- to C-terminus: Very-long-chain enoyl-CoA reductase (308 aa).

At 1 to 86 the chain is on the cytoplasmic side; that stretch reads MKHYEVEIRD…YFRDLGAQIS (86 aa). Lys22 is subject to N6-acetyllysine. Residue Ser58 is modified to Phosphoserine. The residue at position 60 (Lys60) is an N6-acetyllysine. Residues 87–106 form a helical membrane-spanning segment; sequence WVTVFLTEYAGPLFIYLLFY. Residues 107–124 are Lumenal-facing; sequence FRVPFIYGRKYDFTSSRH. A helical membrane pass occupies residues 125–147; the sequence is TVVHLACMCHSFHYIKRLLETLF. Topologically, residues 148–158 are cytoplasmic; the sequence is VHRFSHGTMPL. Residues 159 to 180 form a helical membrane-spanning segment; that stretch reads RNIFKNCTYYWGFAAWMAYYIN. At 181 to 189 the chain is on the lumenal side; that stretch reads HPLYTPPTY. A helical transmembrane segment spans residues 190–216; the sequence is GVQQVKLALAIFVICQLGNFSIHMALR. Residues 217-245 lie on the Cytoplasmic side of the membrane; sequence DLRPAGSKTRKIPYPTKNPFTWLFLLVSC. Residues 246 to 262 traverse the membrane as a helical segment; that stretch reads PNYTYEVGSWIGFAIMT. Residues 263-264 are Lumenal-facing; it reads QC. The helical transmembrane segment at 265 to 292 threads the bilayer; it reads VPVALFSLVGFTQMTIWAKGKHRSYLKE. At 293 to 308 the chain is on the cytoplasmic side; sequence FRDYPPLRMPIIPFLL.

It belongs to the steroid 5-alpha reductase family. As to quaternary structure, interacts with ELOVL1 and LASS2. Glycosylated. In terms of tissue distribution, expressed at high levels in brain and is also found at lower levels in several other tissues.

It localises to the endoplasmic reticulum membrane. It carries out the reaction a very-long-chain 2,3-saturated fatty acyl-CoA + NADP(+) = a very-long-chain (2E)-enoyl-CoA + NADPH + H(+). The enzyme catalyses octadecanoyl-CoA + NADP(+) = (2E)-octadecenoyl-CoA + NADPH + H(+). The catalysed reaction is (2E,7Z,10Z,13Z,16Z)-docosapentaenoyl-CoA + NADPH + H(+) = (7Z,10Z,13Z,16Z)-docosatetraenoyl-CoA + NADP(+). It catalyses the reaction (2E,7Z,10Z,13Z,16Z,19Z)-docosahexaenoyl-CoA + NADPH + H(+) = (7Z,10Z,13Z,16Z,19Z)-docosapentaenoyl-CoA + NADP(+). It carries out the reaction (2E,8Z,11Z,14Z)-eicosatetraenoyl-CoA + NADPH + H(+) = (8Z,11Z,14Z)-eicosatrienoyl-CoA + NADP(+). The enzyme catalyses (2E)-hexadecenoyl-CoA + NADPH + H(+) = hexadecanoyl-CoA + NADP(+). It functions in the pathway lipid metabolism; fatty acid biosynthesis. Its pathway is lipid metabolism; sphingolipid metabolism. Its function is as follows. Involved in both the production of very long-chain fatty acids for sphingolipid synthesis and the degradation of the sphingosine moiety in sphingolipids through the sphingosine 1-phosphate metabolic pathway. Catalyzes the last of the four reactions of the long-chain fatty acids elongation cycle. This endoplasmic reticulum-bound enzymatic process, allows the addition of 2 carbons to the chain of long- and very long-chain fatty acids/VLCFAs per cycle. This enzyme reduces the trans-2,3-enoyl-CoA fatty acid intermediate to an acyl-CoA that can be further elongated by entering a new cycle of elongation. Thereby, it participates in the production of VLCFAs of different chain lengths that are involved in multiple biological processes as precursors of membrane lipids and lipid mediators. Catalyzes the saturation step of the sphingosine 1-phosphate metabolic pathway, the conversion of trans-2-hexadecenoyl-CoA to palmitoyl-CoA. The polypeptide is Very-long-chain enoyl-CoA reductase (Tecr) (Rattus norvegicus (Rat)).